The following is a 317-amino-acid chain: COP9 signalosome complex subunit 6b (317 aa).

Positions 11–164 (FKLHPLVMLN…VTIYESEFHV (154 aa)) constitute an MPN domain.

This sequence belongs to the peptidase M67A family. CSN6 subfamily. In terms of assembly, component of the CSN complex, probably composed of CSN1, CSN2, CSN3, CSN4, CSN5 (CSN5A or CSN5B), CSN6 (CSN6A or CSN6B), CSN7 and CSN8. Interacts with itself. In the complex, it probably interacts directly with CSN4, CSN5A or CSN5B, and CSN7. Binds to the translation initiation factors TIF3E1.

The protein resides in the cytoplasm. The protein localises to the nucleus. Component of the COP9 signalosome complex (CSN), a complex involved in various cellular and developmental processes such as photomorphogenesis and auxin and jasmonate responses. The CSN complex is an essential regulator of the ubiquitin (Ubl) conjugation pathway by mediating the deneddylation of the cullin subunits of SCF-type E3 ligase complexes, leading to decrease the Ubl ligase activity of SCF. It is involved in repression of photomorphogenesis in darkness by regulating the activity of COP1-containing Ubl ligase complexes. The complex is also required for degradation of PSIAA6 by regulating the activity of the Ubl ligase SCF-TIR complex. Essential for the structural integrity of the CSN holocomplex. This chain is COP9 signalosome complex subunit 6b, found in Arabidopsis thaliana (Mouse-ear cress).